A 251-amino-acid polypeptide reads, in one-letter code: Probable transcriptional regulatory protein Arth_2304 (251 aa).

The protein belongs to the TACO1 family.

Its subcellular location is the cytoplasm. The sequence is that of Probable transcriptional regulatory protein Arth_2304 from Arthrobacter sp. (strain FB24).